A 149-amino-acid chain; its full sequence is MRLHTLQPAPGAKSTRKRVGRGTSSGHGKTSGFGHKGQKARSGRVGKRGFEGGQTPLYKKLPKIMRFKNYPFKIEYEVVNVEKLNRFDSGTVVDIGTLVDTGLVSSLSAKVKILGQGEITKALQVKVHAISKSAKEKIEAAGGSVEVVD.

Residues 1–53 (MRLHTLQPAPGAKSTRKRVGRGTSSGHGKTSGFGHKGQKARSGRVGKRGFEGG) are disordered. Residues 23-35 (TSSGHGKTSGFGH) are compositionally biased toward gly residues. Positions 36 to 47 (KGQKARSGRVGK) are enriched in basic residues.

Belongs to the universal ribosomal protein uL15 family. As to quaternary structure, part of the 50S ribosomal subunit.

In terms of biological role, binds to the 23S rRNA. This is Large ribosomal subunit protein uL15 from Coprothermobacter proteolyticus (strain ATCC 35245 / DSM 5265 / OCM 4 / BT).